The chain runs to 219 residues: LexA repressor (219 aa).

The segment at residues 28–48 (RAEIAAELGFRSANAAEEHLQ) is a DNA-binding region (H-T-H motif). Active-site for autocatalytic cleavage activity residues include Ser-138 and Lys-175.

The protein belongs to the peptidase S24 family. As to quaternary structure, homodimer.

It carries out the reaction Hydrolysis of Ala-|-Gly bond in repressor LexA.. Functionally, represses a number of genes involved in the response to DNA damage (SOS response), including recA and lexA. In the presence of single-stranded DNA, RecA interacts with LexA causing an autocatalytic cleavage which disrupts the DNA-binding part of LexA, leading to derepression of the SOS regulon and eventually DNA repair. The protein is LexA repressor of Herminiimonas arsenicoxydans.